The following is a 475-amino-acid chain: MPLTCAERHIFGKSAPISRICAVELTSVAHIREVGITAADMCAYAWHMETTLDGEQVLSDEGYNAFDEERWAPEPPKSKSRTAFERDRARLIHSSALRRLGAKSQILIAGTDDFARTRLTHTLEVAQIGRQIGALLGCDPDVVDCACLAHDLGHPPFGHNGERALADIAGNIGGFEGNAQTMRILTRLEPKIFHPDGRSAGVNLTRAALDAAVKYPWTLAEADRHPKGERSKKFCVYPDDEPVFRWLKIGAPQAAKPMECQIMDLSDDIAYSVHDVEDSIATGAFDPIVLADPKMLDHIIEQTRAWYGAKWDADKLLAAFMRLRREHLFPAHFNGSRESLAQLKNITSDLIGRFCWSVETATRDTYGPGPLTRYSSNIVIPEDTNYEIVALKGIAVYFVMAPREREPFHQEELKIVSDLVDVLMADSPLPSDALESQFLADWNESTNDNERLRVAIDQVASLTDNSALALHSILC.

The region spanning Arg-118–Ser-272 is the HD domain.

It belongs to the dGTPase family. Type 2 subfamily.

The protein is Deoxyguanosinetriphosphate triphosphohydrolase-like protein (dgt) of Bifidobacterium longum (strain NCC 2705).